Consider the following 417-residue polypeptide: Lissencephaly-1 homolog (417 aa).

Residues 7 to 39 (QKEELNGAILDYFDSSGYKLTSTEFTKETNIEL) form the LisH domain. Residues 52 to 80 (TSVIRLQKKVMDLEAKVSQLEEELNNGGR) adopt a coiled-coil conformation. Residues 72 to 93 (EEELNNGGRGPARRGKEDALPR) are disordered. WD repeat units lie at residues 102–143 (GHRN…RTLK), 144–185 (GHTN…KTLH), 186–225 (GHDH…CTKT), 228–267 (GHED…CLLT), 270–339 (EHSH…CLQT), 342–383 (GHDN…KTIN), and 385–417 (AHSH…WKLG).

Belongs to the WD repeat LIS1/nudF family.

It localises to the cytoplasm. It is found in the cytoskeleton. The protein resides in the microtubule organizing center. Its subcellular location is the centrosome. Functionally, positively regulates the activity of the minus-end directed microtubule motor protein dynein. May enhance dynein-mediated microtubule sliding by targeting dynein to the microtubule plus end. Required for several dynein- and microtubule-dependent processes. In Heterostelium pallidum (strain ATCC 26659 / Pp 5 / PN500) (Cellular slime mold), this protein is Lissencephaly-1 homolog.